The following is a 394-amino-acid chain: 1-deoxy-D-xylulose 5-phosphate reductoisomerase (394 aa).

Residues threonine 13, glycine 14, serine 15, isoleucine 16, and asparagine 127 each coordinate NADPH. Lysine 128 provides a ligand contact to 1-deoxy-D-xylulose 5-phosphate. An NADPH-binding site is contributed by glutamate 129. Mn(2+) is bound at residue aspartate 153. 1-deoxy-D-xylulose 5-phosphate contacts are provided by serine 154, glutamate 155, serine 184, and histidine 207. Residue glutamate 155 coordinates Mn(2+). Glycine 213 is an NADPH binding site. Residues serine 220, asparagine 225, lysine 226, and glutamate 229 each coordinate 1-deoxy-D-xylulose 5-phosphate. Glutamate 229 lines the Mn(2+) pocket.

It belongs to the DXR family. Requires Mg(2+) as cofactor. It depends on Mn(2+) as a cofactor.

The catalysed reaction is 2-C-methyl-D-erythritol 4-phosphate + NADP(+) = 1-deoxy-D-xylulose 5-phosphate + NADPH + H(+). The protein operates within isoprenoid biosynthesis; isopentenyl diphosphate biosynthesis via DXP pathway; isopentenyl diphosphate from 1-deoxy-D-xylulose 5-phosphate: step 1/6. Functionally, catalyzes the NADPH-dependent rearrangement and reduction of 1-deoxy-D-xylulose-5-phosphate (DXP) to 2-C-methyl-D-erythritol 4-phosphate (MEP). The chain is 1-deoxy-D-xylulose 5-phosphate reductoisomerase from Ectopseudomonas mendocina (strain ymp) (Pseudomonas mendocina).